Reading from the N-terminus, the 278-residue chain is 4-hydroxy-3-methylbut-2-enyl diphosphate reductase (278 aa).

Cys-12 serves as a coordination point for [4Fe-4S] cluster. Residues His-41 and His-74 each coordinate (2E)-4-hydroxy-3-methylbut-2-enyl diphosphate. 2 residues coordinate dimethylallyl diphosphate: His-41 and His-74. Isopentenyl diphosphate-binding residues include His-41 and His-74. [4Fe-4S] cluster is bound at residue Cys-96. His-124 contributes to the (2E)-4-hydroxy-3-methylbut-2-enyl diphosphate binding site. His-124 provides a ligand contact to dimethylallyl diphosphate. Isopentenyl diphosphate is bound at residue His-124. The active-site Proton donor is the Glu-126. Residue Thr-161 participates in (2E)-4-hydroxy-3-methylbut-2-enyl diphosphate binding. Residue Cys-189 coordinates [4Fe-4S] cluster. (2E)-4-hydroxy-3-methylbut-2-enyl diphosphate-binding residues include Ser-217, Asn-219, and Ser-261. The dimethylallyl diphosphate site is built by Ser-217, Asn-219, and Ser-261. Residues Ser-217, Asn-219, and Ser-261 each coordinate isopentenyl diphosphate.

This sequence belongs to the IspH family. It depends on [4Fe-4S] cluster as a cofactor.

It catalyses the reaction isopentenyl diphosphate + 2 oxidized [2Fe-2S]-[ferredoxin] + H2O = (2E)-4-hydroxy-3-methylbut-2-enyl diphosphate + 2 reduced [2Fe-2S]-[ferredoxin] + 2 H(+). The enzyme catalyses dimethylallyl diphosphate + 2 oxidized [2Fe-2S]-[ferredoxin] + H2O = (2E)-4-hydroxy-3-methylbut-2-enyl diphosphate + 2 reduced [2Fe-2S]-[ferredoxin] + 2 H(+). It participates in isoprenoid biosynthesis; dimethylallyl diphosphate biosynthesis; dimethylallyl diphosphate from (2E)-4-hydroxy-3-methylbutenyl diphosphate: step 1/1. The protein operates within isoprenoid biosynthesis; isopentenyl diphosphate biosynthesis via DXP pathway; isopentenyl diphosphate from 1-deoxy-D-xylulose 5-phosphate: step 6/6. In terms of biological role, catalyzes the conversion of 1-hydroxy-2-methyl-2-(E)-butenyl 4-diphosphate (HMBPP) into a mixture of isopentenyl diphosphate (IPP) and dimethylallyl diphosphate (DMAPP). Acts in the terminal step of the DOXP/MEP pathway for isoprenoid precursor biosynthesis. The protein is 4-hydroxy-3-methylbut-2-enyl diphosphate reductase of Anaeromyxobacter sp. (strain K).